The primary structure comprises 888 residues: Leukocyte tyrosine kinase receptor (888 aa).

The signal sequence occupies residues 1–16 (MGCSHRLLLWLGAAGT). Residues 17–421 (ILCSNSEFQT…CMDLPTTASP (405 aa)) are Extracellular-facing. 2 cysteine pairs are disulfide-bonded: Cys73/Cys86 and Cys168/Cys179. The tract at residues 226–294 (LVAAGGGGRS…RSPREGAEGG (69 aa)) is disordered. A compositionally biased stretch (gly residues) spans 260–273 (GSGGRGGAAGGGSG). Cys297 and Cys319 are oxidised to a cystine. N-linked (GlcNAc...) asparagine glycans are attached at residues Asn377 and Asn409. Residues 422-446 (LILMGAVVAALALSLLMMCAVLILV) form a helical membrane-spanning segment. Residues 447–888 (NQKCQGLWGT…SSSSSIPGIQ (442 aa)) lie on the Cytoplasmic side of the membrane. In terms of domain architecture, Protein kinase spans 506–782 (VTLLRALGHG…IQYCTQDPDV (277 aa)). Residues 512–520 (LGHGAFGEV) and Lys540 each bind ATP. The active-site Proton acceptor is Asp639. At Tyr672 the chain carries Phosphotyrosine; by autocatalysis. The disordered stretch occupies residues 857–888 (TYGSWTPRGPQGEDTGIEHCNGSSSSSIPGIQ). Residues 877 to 888 (NGSSSSSIPGIQ) are compositionally biased toward polar residues.

Belongs to the protein kinase superfamily. Tyr protein kinase family. Insulin receptor subfamily. Homodimer; homodimerizes following ligand-binding. Part of a complex including LTK, TNK2 and GRB2, in which GRB2 promotes LTK recruitment by TNK2. In terms of processing, phosphorylated at tyrosine residues by autocatalysis, which activates kinase activity. Subsets of lymphoid and neuronal cells.

The protein localises to the cell membrane. Its subcellular location is the endoplasmic reticulum. The catalysed reaction is L-tyrosyl-[protein] + ATP = O-phospho-L-tyrosyl-[protein] + ADP + H(+). Activated by ligand-binding, leading to homodimerization and autophosphorylation. Functionally, receptor with a tyrosine-protein kinase activity. Following activation by ALKAL1 or ALKAL2 ligands at the cell surface, transduces an extracellular signal into an intracellular response. Ligand-binding to the extracellular domain induces tyrosine kinase activation, leading to activation of the mitogen-activated protein kinase (MAPK) pathway. Phosphorylates almost exclusively at the first tyrosine of the Y-x-x-x-Y-Y motif. The exact function of this protein is not known; studies with chimeric proteins demonstrate its ability to promote growth and specifically neurite outgrowth, and cell survival. Involved in regulation of the secretory pathway involving endoplasmic reticulum (ER) export sites (ERESs) and ER to Golgi transport. The chain is Leukocyte tyrosine kinase receptor from Mus musculus (Mouse).